Here is a 67-residue protein sequence, read N- to C-terminus: Large ribosomal subunit protein bL35 (67 aa).

Belongs to the bacterial ribosomal protein bL35 family.

This Methylorubrum extorquens (strain CM4 / NCIMB 13688) (Methylobacterium extorquens) protein is Large ribosomal subunit protein bL35.